The following is a 269-amino-acid chain: uncharacterized protein (269 aa).

An ATP-binding site is contributed by 103-110 (GIFTMGKS).

This is an uncharacterized protein from Mycoplasma pneumoniae (strain ATCC 29342 / M129 / Subtype 1) (Mycoplasmoides pneumoniae).